The following is a 351-amino-acid chain: UDP-3-O-acylglucosamine N-acyltransferase (351 aa).

His240 serves as the catalytic Proton acceptor.

It belongs to the transferase hexapeptide repeat family. LpxD subfamily. Homotrimer.

It carries out the reaction a UDP-3-O-[(3R)-3-hydroxyacyl]-alpha-D-glucosamine + a (3R)-hydroxyacyl-[ACP] = a UDP-2-N,3-O-bis[(3R)-3-hydroxyacyl]-alpha-D-glucosamine + holo-[ACP] + H(+). It participates in bacterial outer membrane biogenesis; LPS lipid A biosynthesis. Catalyzes the N-acylation of UDP-3-O-acylglucosamine using 3-hydroxyacyl-ACP as the acyl donor. Is involved in the biosynthesis of lipid A, a phosphorylated glycolipid that anchors the lipopolysaccharide to the outer membrane of the cell. The sequence is that of UDP-3-O-acylglucosamine N-acyltransferase from Pseudomonas savastanoi pv. phaseolicola (strain 1448A / Race 6) (Pseudomonas syringae pv. phaseolicola (strain 1448A / Race 6)).